Reading from the N-terminus, the 285-residue chain is Protoheme IX farnesyltransferase (285 aa).

9 helical membrane passes run 8-28 (ITKPGIIIGNSTLITGGFLFA), 36-56 (YVLFIYTILGASLVIASACVF), 80-100 (LLPVFSVFNFAIFLGVLGLSI), 107-127 (FISMSLAVFGFFIYVVLYTMF), 133-153 (FYSTFIGSFSGSTPSVIGYTA), 163-183 (ILLFVIVIFWQMSHFYSISIM), 209-229 (IFFYVLNFSFFSSLFTFLGYL), 232-252 (NFLLLSSIVNFYWSFLSYSNI), and 265-285 (FYFSIIVIVFFNFLISIDVFF).

This sequence belongs to the UbiA prenyltransferase family. Protoheme IX farnesyltransferase subfamily.

The protein localises to the cell membrane. It carries out the reaction heme b + (2E,6E)-farnesyl diphosphate + H2O = Fe(II)-heme o + diphosphate. The protein operates within porphyrin-containing compound metabolism; heme O biosynthesis; heme O from protoheme: step 1/1. Its function is as follows. Converts heme B (protoheme IX) to heme O by substitution of the vinyl group on carbon 2 of heme B porphyrin ring with a hydroxyethyl farnesyl side group. The polypeptide is Protoheme IX farnesyltransferase (Buchnera aphidicola subsp. Acyrthosiphon pisum (strain Tuc7)).